We begin with the raw amino-acid sequence, 492 residues long: Beclin 1-associated autophagy-related key regulator (492 aa).

Phosphoserine is present on Ser29. Residues 70-180 adopt a coiled-coil conformation; it reads RDRERFIDKK…KLGDLVEKKT (111 aa). 2 disordered regions span residues 213-232 and 411-473; these read TSGRDPADVSSETDSAMTSS and GVAG…AGGM. The span at 222–232 shows a compositional bias: polar residues; sequence SSETDSAMTSS. Ser416 carries the phosphoserine modification. Over residues 424 to 433 the composition is skewed to acidic residues; sequence VSDEETDLGT. Residue Thr429 is modified to Phosphothreonine. Residues 447–473 show a composition bias toward low complexity; that stretch reads PSQPVEVSQSQSTQASPPIASSSAGGM.

This sequence belongs to the ATG14 family. In terms of assembly, forms homooligomers; homo-oligomerization is essential for the roles in membrane tethering and enhancement of SNARE-mediated fusion. Component of the PI3K (PI3KC3/PI3K-III/class III phosphatidylinositol 3-kinase) complex I (PI3KC3-C1) in which the core composed of the catalytic subunit PIK3C3, the regulatory subunit PIK3R4 and BECN1 is associated with ATG14. PI3KC3-C1 displays a V-shaped architecture with PIK3R4 serving as a bridge between PIK3C3 and the ATG14:BECN1 subcomplex. PI3KC3-C1 can associate with further regulatory subunits. Interacts with PIK3CB. Interacts (via coiled-coil domain) with BECN2 (via coiled-coil domain); this interaction is tighter than BECN2 self-association. Interacts with the STX17-SNAP29 binary t-SNARE complex. Interacts with NRBF2. Interacts with PIK3C3 and BECN1; this interaction is increased in the absence of TMEM39A. Interacts with STEEP1; the interaction is required for trafficking of STING1 from the endoplasmic reticulum. Interacts with ARMC3 (via ARM domains). Ubiquitinated via 'Lys-6', 'Lys-11' and 'Lys-63'-linked polyubiquitin chains on multiple lysines by MARCHF7, leading to ATG14 aggregation and loss of interaction with STX17.

The protein localises to the cytoplasm. It localises to the endoplasmic reticulum membrane. The protein resides in the preautophagosomal structure membrane. Required for both basal and inducible autophagy. Determines the localization of the autophagy-specific PI3-kinase complex. Plays a role in autophagosome formation and MAP1LC3/LC3 conjugation to phosphatidylethanolamine. Promotes BECN1 translocation from the trans-Golgi network to autophagosomes. Enhances PIK3C3 activity in a BECN1-dependent manner. Essential for the autophagy-dependent phosphorylation of BECN1. Stimulates the phosphorylation of BECN1, but suppresses the phosphorylation PIK3C3 by AMPK. Binds to STX17-SNAP29 binary t-SNARE complex on autophagosomes and primes it for VAMP8 interaction to promote autophagosome-endolysosome fusion. Modulates the hepatic lipid metabolism. The protein is Beclin 1-associated autophagy-related key regulator of Rattus norvegicus (Rat).